A 149-amino-acid chain; its full sequence is Aquaporin-like protein 2 (149 aa).

Residues 1 to 35 (MSNESNDLEKNISHLDPTGVDNAYIPPEQPETKHS) form a disordered region. At 1–47 (MSNESNDLEKNISHLDPTGVDNAYIPPEQPETKHSRFNIDRGTLRNH) the chain is on the cytoplasmic side. A helical transmembrane segment spans residues 48 to 68 (FIAAVGEFCGTFMFLWCAYVI). At 69-89 (CNVANHDVALTTEPEGSHPGQ) the chain is on the extracellular side. Residues 90–110 (LIMIALGFGFSVMFSIWCFWW) traverse the membrane as a helical segment. At 111–149 (GFEPSRFSLFVFGQSHLTSQMCSDVVSSDHCWDGCWWCR) the chain is on the cytoplasmic side.

This sequence belongs to the MIP/aquaporin (TC 1.A.8) family.

It localises to the endoplasmic reticulum membrane. It is found in the cell membrane. Functionally, water channel required to facilitate the transport of water across membranes. Involved in freeze tolerance, osmotolerance and cell flocculation in liquid cultures. Is non-functional in most laboratory strains. This is Aquaporin-like protein 2 (AQY2-2) from Saccharomyces cerevisiae (strain Lalvin EC1118 / Prise de mousse) (Baker's yeast).